A 163-amino-acid polypeptide reads, in one-letter code: Phosphopantetheine adenylyltransferase (163 aa).

S11 is a substrate binding site. Residues 11-12 (SF) and H19 each bind ATP. Substrate is bound by residues K43, L75, and R89. Residues 90–92 (GLR), E100, and 125–131 (YSFLSSS) contribute to the ATP site.

Belongs to the bacterial CoaD family. As to quaternary structure, homohexamer. The cofactor is Mg(2+).

Its subcellular location is the cytoplasm. The catalysed reaction is (R)-4'-phosphopantetheine + ATP + H(+) = 3'-dephospho-CoA + diphosphate. Its pathway is cofactor biosynthesis; coenzyme A biosynthesis; CoA from (R)-pantothenate: step 4/5. Its function is as follows. Reversibly transfers an adenylyl group from ATP to 4'-phosphopantetheine, yielding dephospho-CoA (dPCoA) and pyrophosphate. This is Phosphopantetheine adenylyltransferase from Lysinibacillus sphaericus (strain C3-41).